The chain runs to 584 residues: Tyrosine-protein kinase Dnt (584 aa).

Residues Met1 to Gly40 form the signal peptide. Topologically, residues Ser41 to Gly208 are extracellular. One can recognise a WIF domain in the interval Val49 to Cys180. N-linked (GlcNAc...) asparagine glycans are attached at residues Asn124, Asn163, Asn168, and Asn183. A helical membrane pass occupies residues Leu209 to Ile229. Over Ala230 to Val584 the chain is Cytoplasmic. Positions Gln241–His261 are disordered. Positions Met250–His261 are enriched in polar residues. Positions Val317 to Tyr577 constitute a Protein kinase domain. Residues Leu323–Val331 and Lys345 each bind ATP. Asp442 (proton acceptor) is an active-site residue. Tyr472 carries the post-translational modification Phosphotyrosine; by autocatalysis.

This sequence belongs to the protein kinase superfamily. Tyr protein kinase family. Expressed in dynamic domains in the embryonic epidermis, many of which border on sites of epithelial invagination into the embryo interior, including ventral furrow, cephalic furrow, fore- and hindgut, optic lobe and tracheal pits. Later in embryogenesis, expression is seen in imaginal tissues.

It localises to the cell membrane. The catalysed reaction is L-tyrosyl-[protein] + ATP = O-phospho-L-tyrosyl-[protein] + ADP + H(+). May play an essential role in neuronal pathway recognition and ventral muscle attachment site selection. This chain is Tyrosine-protein kinase Dnt (dnt), found in Drosophila melanogaster (Fruit fly).